The following is a 255-amino-acid chain: HLA class II histocompatibility antigen, DQ alpha 2 chain (255 aa).

The first 23 residues, 1-23 (MILNKALLLGALALTAVMSPCGG), serve as a signal peptide directing secretion. The alpha-1 stretch occupies residues 24–110 (EDIVADHVAS…RQSNSTAATN (87 aa)). The Extracellular segment spans residues 24–217 (EDIVADHVAS…IPAPMSELTE (194 aa)). Asparagine 104 and asparagine 144 each carry an N-linked (GlcNAc...) asparagine glycan. The tract at residues 111 to 204 (EVPEVTVFSK…GLDEPLLKHW (94 aa)) is alpha-2. The 93-residue stretch at 113–205 (PEVTVFSKFP…LDEPLLKHWE (93 aa)) folds into the Ig-like C1-type domain. A disulfide bridge links cysteine 133 with cysteine 189. The connecting peptide stretch occupies residues 205 to 217 (EPEIPAPMSELTE). A helical membrane pass occupies residues 218–240 (TLVCALGLSVGLMGIVVGTVFII). Residues 241–255 (QGLRSVGASRHQGLL) lie on the Cytoplasmic side of the membrane.

The protein belongs to the MHC class II family. As to quaternary structure, heterodimer of an alpha and a beta subunit; also referred as MHC class II molecule. Dimer formation with HLA-DQB2, but not with HLA-DQB1, is required for efficient exit from the endoplasmic reticulum (ER). In the ER, forms a heterononamer; 3 MHC class II molecules bind to a CD74 homotrimer (also known as invariant chain or HLA class II histocompatibility antigen gamma chain). In the endosomal/lysosomal system; CD74 undergoes sequential degradation by various proteases; leaving a small fragment termed CLIP on each MHC class II molecule. MHC class II molecule interacts with HLA_DM, and HLA_DO in B-cells, in order to release CLIP and facilitate the binding of antigenic peptides. Association with HLA-DMA also occurs in skin Langerhans cells, in post-Golgi compartments. As to expression, restricted to skin Langerhans cells, although some expression at low levels may occur at the surface of B lymphoblastoid cells.

It is found in the cell membrane. The protein resides in the endoplasmic reticulum membrane. The protein localises to the golgi apparatus. It localises to the trans-Golgi network membrane. Its subcellular location is the endosome membrane. It is found in the lysosome membrane. Functionally, binds peptides derived from antigens that access the endocytic route of antigen presenting cells (APC) and presents them on the cell surface for recognition by the CD4 T-cells. The peptide binding cleft accommodates peptides of 10-30 residues. The peptides presented by MHC class II molecules are generated mostly by degradation of proteins that access the endocytic route, where they are processed by lysosomal proteases and other hydrolases. Exogenous antigens that have been endocytosed by the APC are thus readily available for presentation via MHC II molecules, and for this reason this antigen presentation pathway is usually referred to as exogenous. As membrane proteins on their way to degradation in lysosomes as part of their normal turn-over are also contained in the endosomal/lysosomal compartments, exogenous antigens must compete with those derived from endogenous components. Autophagy is also a source of endogenous peptides, autophagosomes constitutively fuse with MHC class II loading compartments. In addition to APCs, other cells of the gastrointestinal tract, such as epithelial cells, express MHC class II molecules and CD74 and act as APCs, which is an unusual trait of the GI tract. To produce a MHC class II molecule that presents an antigen, three MHC class II molecules (heterodimers of an alpha and a beta chain) associate with a CD74 trimer in the ER to form a heterononamer. Soon after the entry of this complex into the endosomal/lysosomal system where antigen processing occurs, CD74 undergoes a sequential degradation by various proteases, including CTSS and CTSL, leaving a small fragment termed CLIP (class-II-associated invariant chain peptide). The removal of CLIP is facilitated by HLA-DM via direct binding to the alpha-beta-CLIP complex so that CLIP is released. HLA-DM stabilizes MHC class II molecules until primary high affinity antigenic peptides are bound. The MHC II molecule bound to a peptide is then transported to the cell membrane surface. In B-cells, the interaction between HLA-DM and MHC class II molecules is regulated by HLA-DO. Primary dendritic cells (DCs) also to express HLA-DO. Lysosomal microenvironment has been implicated in the regulation of antigen loading into MHC II molecules, increased acidification produces increased proteolysis and efficient peptide loading. The protein is HLA class II histocompatibility antigen, DQ alpha 2 chain (HLA-DQA2) of Homo sapiens (Human).